We begin with the raw amino-acid sequence, 476 residues long: Aspartyl/glutamyl-tRNA(Asn/Gln) amidotransferase subunit B (476 aa).

This sequence belongs to the GatB/GatE family. GatB subfamily. As to quaternary structure, heterotrimer of A, B and C subunits.

It carries out the reaction L-glutamyl-tRNA(Gln) + L-glutamine + ATP + H2O = L-glutaminyl-tRNA(Gln) + L-glutamate + ADP + phosphate + H(+). The enzyme catalyses L-aspartyl-tRNA(Asn) + L-glutamine + ATP + H2O = L-asparaginyl-tRNA(Asn) + L-glutamate + ADP + phosphate + 2 H(+). Its function is as follows. Allows the formation of correctly charged Asn-tRNA(Asn) or Gln-tRNA(Gln) through the transamidation of misacylated Asp-tRNA(Asn) or Glu-tRNA(Gln) in organisms which lack either or both of asparaginyl-tRNA or glutaminyl-tRNA synthetases. The reaction takes place in the presence of glutamine and ATP through an activated phospho-Asp-tRNA(Asn) or phospho-Glu-tRNA(Gln). This chain is Aspartyl/glutamyl-tRNA(Asn/Gln) amidotransferase subunit B, found in Clostridium botulinum (strain Alaska E43 / Type E3).